A 286-amino-acid polypeptide reads, in one-letter code: NAD kinase (286 aa).

Asp-67 acts as the Proton acceptor in catalysis. Residues 67-68 (DG), Arg-72, 141-142 (ND), Arg-152, Asp-171, 182-187 (TAYSLS), and Gln-242 each bind NAD(+).

The protein belongs to the NAD kinase family. A divalent metal cation serves as cofactor.

It is found in the cytoplasm. The catalysed reaction is NAD(+) + ATP = ADP + NADP(+) + H(+). In terms of biological role, involved in the regulation of the intracellular balance of NAD and NADP, and is a key enzyme in the biosynthesis of NADP. Catalyzes specifically the phosphorylation on 2'-hydroxyl of the adenosine moiety of NAD to yield NADP. The polypeptide is NAD kinase (Ruminiclostridium cellulolyticum (strain ATCC 35319 / DSM 5812 / JCM 6584 / H10) (Clostridium cellulolyticum)).